The primary structure comprises 795 residues: ATP-dependent RNA helicase DHX15 (795 aa).

Residues 1-108 (MSKRHRLDLG…HSTHAGHAGH (108 aa)) form a disordered region. Ser15 bears the Phosphoserine mark. The segment covering 20–62 (AGTDGKDRDRDRDREDRSKDRDRERDRGDREREREKEKEKELR) has biased composition (basic and acidic residues). Residues 79-108 (ASHSAHSTHSAHSTHSTHSAHSTHAGHAGH) are compositionally biased toward low complexity. Residues 147 to 313 (TDILVRHQSF…FDNCPLLTIP (167 aa)) enclose the Helicase ATP-binding domain. 160 to 167 (GETGSGKT) is an ATP binding site. A DEAH box motif is present at residues 260–263 (DEAH). Residues 338-518 (TVIQIHMCEE…SVVLQLKKLG (181 aa)) form the Helicase C-terminal domain. Lys488 carries the post-translational modification N6-acetyllysine. Residue Lys786 forms a Glycyl lysine isopeptide (Lys-Gly) (interchain with G-Cter in SUMO2) linkage.

It belongs to the DEAD box helicase family. DEAH subfamily. DDX15/PRP43 sub-subfamily. As to quaternary structure, component of the U11/U12 snRNPs that are part of the U12-type spliceosome. Identified in the Intron Large spliceosome complex (IL, also named intron lariat spliceosome), a post-mRNA release spliceosomal complex containing the excised intron, U2, U5 and U6 snRNPs, and splicing factors; the association may be transient. The IL complex exists in two distinct conformations, one with the DHX15 (ILS2) and one without (ILS1). Interacts with TFIP11 (via G-patch domain); indicative for a recruitment to the IL complex. Interacts with SSB/La. Interacts with GPATCH2 (via G-patch domain); promoting the RNA helicase activity. Interacts with NKRF (via G-patch domain); promoting the RNA helicase activity. Interacts with NLRP6. In terms of tissue distribution, ubiquitous.

The protein localises to the nucleus. It localises to the nucleolus. The enzyme catalyses ATP + H2O = ADP + phosphate + H(+). With respect to regulation, ATPase activity is enhanced upon binding to G-patch domain-containing proteins. G-patch domain-containing proteins act like a brace that tethers mobile sections of DHX15 together, stabilizing a functional conformation with high RNA affinity, thereby promoting the ATPase activity. Functionally, RNA helicase involved in mRNA processing and antiviral innate immunity. Pre-mRNA processing factor involved in disassembly of spliceosomes after the release of mature mRNA. In cooperation with TFIP11 seem to be involved in the transition of the U2, U5 and U6 snRNP-containing IL complex to the snRNP-free IS complex leading to efficient debranching and turnover of excised introns. Plays a key role in antiviral innate immunity by promoting both MAVS-dependent signaling and NLRP6 inflammasome. Acts as an RNA virus sensor: recognizes and binds viral double stranded RNA (dsRNA) and activates the MAVS-dependent signaling to produce interferon-beta and interferon lambda-3 (IFNL3). Involved in intestinal antiviral innate immunity together with NLRP6: recognizes and binds viral dsRNA and promotes activation of the NLRP6 inflammasome in intestinal epithelial cells to restrict infection by enteric viruses. The NLRP6 inflammasome acts by promoting maturation and secretion of IL18 in the extracellular milieu. Also involved in antibacterial innate immunity by promoting Wnt-induced antimicrobial protein expression in Paneth cells. This Homo sapiens (Human) protein is ATP-dependent RNA helicase DHX15.